A 162-amino-acid chain; its full sequence is uncharacterized protein (162 aa).

The next 3 membrane-spanning stretches (helical) occupy residues 7-27 (LIAD…IVGL), 51-71 (LSIL…YMIG), and 134-154 (TYVA…ITIG).

This sequence belongs to the DedA family.

It is found in the cell membrane. This is an uncharacterized protein from Bacillus subtilis (strain 168).